The following is a 205-amino-acid chain: Probable GTP-binding protein EngB (205 aa).

Residues 29–203 (QGAEIAFIGR…KAVLSQWFRS (175 aa)) form the EngB-type G domain. Residues 37–44 (GRSNAGKS), 64–68 (GRTQM), 82–85 (DLPG), 149–152 (TKSD), and 182–184 (FSS) contribute to the GTP site. Mg(2+) contacts are provided by S44 and T66.

It belongs to the TRAFAC class TrmE-Era-EngA-EngB-Septin-like GTPase superfamily. EngB GTPase family. Mg(2+) serves as cofactor.

Necessary for normal cell division and for the maintenance of normal septation. The polypeptide is Probable GTP-binding protein EngB (Coxiella burnetii (strain RSA 331 / Henzerling II)).